Reading from the N-terminus, the 160-residue chain is Cytochrome b6-f complex subunit 4 (160 aa).

The next 3 membrane-spanning stretches (helical) occupy residues L36 to V56, L95 to E115, and T131 to I151.

Belongs to the cytochrome b family. PetD subfamily. The 4 large subunits of the cytochrome b6-f complex are cytochrome b6, subunit IV (17 kDa polypeptide, petD), cytochrome f and the Rieske protein, while the 4 small subunits are petG, petL, petM and petN. The complex functions as a dimer.

It localises to the plastid. The protein localises to the chloroplast thylakoid membrane. Its function is as follows. Component of the cytochrome b6-f complex, which mediates electron transfer between photosystem II (PSII) and photosystem I (PSI), cyclic electron flow around PSI, and state transitions. In Stigeoclonium helveticum (Green alga), this protein is Cytochrome b6-f complex subunit 4.